Reading from the N-terminus, the 334-residue chain is Small ribosomal subunit protein RACK1z (334 aa).

7 WD repeats span residues 16–47 (GHNDVVTAIATPIDNSPFIVSSSRDKSLLVWD), 73–103 (GHSHFVQDVVLSSDGQFALSGSWDGELRLWD), 115–145 (GHDKDVLSVAFSVDNRQIVSASRDRTIKLWN), 163–195 (GHNGWVSCVRFSPNTFQPTIVSGSWDRTVKVWN), 207–237 (GHGGYVNAVAVSPDGSLCASGGKDGVTLLWD), 248–277 (DAGSIIHSLCFSPNRYWLCAATQDSIKIWD), and 296–326 (NQMLYCTSLNWSADGSTLYAGYTDGTIRIYK).

The protein belongs to the WD repeat G protein beta family. Ribosomal protein RACK1 subfamily. Interacts with RAC1, RAC3, RAC6, RAR1, SGT1 and RBOHB. Homodimer and heterodimer with RACK1B. As to expression, widely expressed.

The protein resides in the cytoplasm. The protein localises to the cell membrane. In terms of biological role, component of the RACK1 regulatory proteins that functions in innate immunity by interacting with multiple proteins in the RAC1 immune complex. Acts as a positive regulator of reactive oxygen species (ROS) production and is required for resistance against rice blast (M.grisea) infection. The protein is Small ribosomal subunit protein RACK1z (RACK1A) of Oryza sativa subsp. japonica (Rice).